The primary structure comprises 349 residues: Phosphoribosylformylglycinamidine cyclo-ligase (349 aa).

This sequence belongs to the AIR synthase family.

The protein localises to the cytoplasm. The enzyme catalyses 2-formamido-N(1)-(5-O-phospho-beta-D-ribosyl)acetamidine + ATP = 5-amino-1-(5-phospho-beta-D-ribosyl)imidazole + ADP + phosphate + H(+). It participates in purine metabolism; IMP biosynthesis via de novo pathway; 5-amino-1-(5-phospho-D-ribosyl)imidazole from N(2)-formyl-N(1)-(5-phospho-D-ribosyl)glycinamide: step 2/2. The chain is Phosphoribosylformylglycinamidine cyclo-ligase from Listeria monocytogenes serovar 1/2a (strain ATCC BAA-679 / EGD-e).